The chain runs to 126 residues: uncharacterized protein (126 aa).

This is an uncharacterized protein from Bacillus subtilis (strain 168).